We begin with the raw amino-acid sequence, 1355 residues long: Probable aldehyde oxidase 2 (1355 aa).

The 2Fe-2S ferredoxin-type domain maps to 9 to 96; that stretch reads RPVVVTVNGE…HCAVTTSEGI (88 aa). Residues Cys-48, Cys-53, Cys-56, and Cys-78 each contribute to the [2Fe-2S] cluster site. The FAD-binding PCMH-type domain maps to 244–422; that stretch reads VAVTGDGWFH…VSISIPDWGS (179 aa). The disordered stretch occupies residues 544-577; that stretch reads PENANVPNGSCTNGTANGSANSSPEKHSNVDSSD. A compositionally biased stretch (polar residues) spans 548–566; sequence NVPNGSCTNGTANGSANSS.

This sequence belongs to the xanthine dehydrogenase family. Aldehyde oxidases (AO) are homodimers and heterodimers of AO subunits. It depends on [2Fe-2S] cluster as a cofactor. FAD serves as cofactor. Requires Mo-molybdopterin as cofactor.

The enzyme catalyses an aldehyde + O2 + H2O = a carboxylate + H2O2 + H(+). In Oryza sativa subsp. japonica (Rice), this protein is Probable aldehyde oxidase 2.